We begin with the raw amino-acid sequence, 50 residues long: Photosystem II reaction center protein M (50 aa).

The chain crosses the membrane as a helical span at residues 7–27; that stretch reads GFVASLLFVGIPTIFLIGLFI.

This sequence belongs to the PsbM family. In terms of assembly, PSII is composed of 1 copy each of membrane proteins PsbA, PsbB, PsbC, PsbD, PsbE, PsbF, PsbH, PsbI, PsbJ, PsbK, PsbL, PsbM, PsbT, PsbX, PsbY, Psb30/Ycf12, peripheral proteins PsbO, CyanoQ (PsbQ), PsbU, PsbV and a large number of cofactors. It forms dimeric complexes.

The protein resides in the cellular thylakoid membrane. Functionally, one of the components of the core complex of photosystem II (PSII). PSII is a light-driven water:plastoquinone oxidoreductase that uses light energy to abstract electrons from H(2)O, generating O(2) and a proton gradient subsequently used for ATP formation. It consists of a core antenna complex that captures photons, and an electron transfer chain that converts photonic excitation into a charge separation. This subunit is found at the monomer-monomer interface. The protein is Photosystem II reaction center protein M of Prochlorococcus marinus subsp. pastoris (strain CCMP1986 / NIES-2087 / MED4).